Here is a 96-residue protein sequence, read N- to C-terminus: uncharacterized protein (96 aa).

Helical transmembrane passes span 3 to 23 (KLTI…QLFA), 30 to 50 (TLGN…LASI), and 68 to 88 (IGLL…IIII).

Its subcellular location is the cell membrane. This is an uncharacterized protein from Bacillus subtilis (strain 168).